Here is a 149-residue protein sequence, read N- to C-terminus: Ribonuclease H (149 aa).

The RNase H type-1 domain occupies 1-143; the sequence is MNQVVIYTDG…ADALANKGVD (143 aa). Residues Asp-9, Glu-47, Asp-69, and Asp-135 each contribute to the Mg(2+) site.

Belongs to the RNase H family. As to quaternary structure, monomer. It depends on Mg(2+) as a cofactor.

The protein resides in the cytoplasm. The enzyme catalyses Endonucleolytic cleavage to 5'-phosphomonoester.. Endonuclease that specifically degrades the RNA of RNA-DNA hybrids. The protein is Ribonuclease H of Paracidovorax citrulli (strain AAC00-1) (Acidovorax citrulli).